The following is a 208-amino-acid chain: MEMTKLFSYIVIKNVYYPQVSFGISANTFLLLFHIFTFAYTHRLKPIDMTISHLPLIHILLLFTQAILVSSDLFESWNIQNNDLKCKIITFLNRVMRGVSICTTCLLSVLQAITISPSTSFLEKFKHISANHTLGFILFSWVLNMFITNNLLLFIVPTPNRIGASLLFVTEHCYVLPMSYTHRSLFFILMVLRDVIFIGLMVLSSGYG.

Topologically, residues Met1–Gln19 are extracellular. A helical transmembrane segment spans residues Val20–Tyr40. At Thr41 to Asp48 the chain is on the cytoplasmic side. A helical membrane pass occupies residues Met49–Val69. Topologically, residues Ser70 to Arg97 are extracellular. Cys86 and Cys173 are joined by a disulfide. Residues Gly98–Ser118 form a helical membrane-spanning segment. The Cytoplasmic portion of the chain corresponds to Thr119–Gly135. The helical transmembrane segment at Phe136 to Val156 threads the bilayer. Over Pro157–Arg183 the chain is Extracellular. The chain crosses the membrane as a helical span at residues Ser184–Ser204. The Cytoplasmic segment spans residues Ser205–Gly208.

It belongs to the G-protein coupled receptor 1 family. Expressed in olfactory nerve.

The protein resides in the cell membrane. Its function is as follows. Putative pheromone receptor. In Homo sapiens (Human), this protein is Putative vomeronasal receptor-like protein 4 (VN1R17P).